The following is a 319-amino-acid chain: Fructokinase (319 aa).

It belongs to the carbohydrate kinase PfkB family. In terms of tissue distribution, expressed in swelling stolons and, at higher levels, in developing tubers. Low levels found in leaves and stems from tuberizing plants.

The catalysed reaction is D-fructose + ATP = D-fructose 6-phosphate + ADP + H(+). It functions in the pathway glycan biosynthesis; starch biosynthesis. Its function is as follows. May play an important role in maintaining the flux of carbon towards starch formation. The polypeptide is Fructokinase (Solanum tuberosum (Potato)).